The chain runs to 442 residues: Probable xylan O-acetyltransferase 8 (442 aa).

The Cytoplasmic portion of the chain corresponds to 1 to 13 (MVQLPAMKRVKGR). The chain crosses the membrane as a helical; Signal-anchor for type II membrane protein span at residues 14–34 (APLSVVVAIIGGLALAGIIFT). Residues 35–442 (EDLRGLTEVK…TWNRLLYAHL (408 aa)) are Lumenal-facing. Asn96 carries an N-linked (GlcNAc...) asparagine glycan. Intrachain disulfides connect Cys100-Cys151, Cys122-Cys187, Cys131-Cys426, and Cys344-Cys422. A GDS motif motif is present at residues 174-176 (GDS). The active-site Nucleophile is the Ser176. 3 N-linked (GlcNAc...) asparagine glycosylation sites follow: Asn217, Asn346, and Asn384. Asp421 acts as the Proton donor in catalysis. Residues 421 to 424 (DCIH) carry the DXXH motif motif. Residue His424 is the Proton acceptor of the active site.

This sequence belongs to the PC-esterase family. TBL subfamily.

It localises to the golgi apparatus membrane. Its function is as follows. Probable xylan acetyltransferase required for 2-O- and 3-O-monoacetylation of xylosyl residues in xylan. Possesses extremely low activity in vitro. This is Probable xylan O-acetyltransferase 8 from Oryza sativa subsp. japonica (Rice).